The following is a 607-amino-acid chain: Homologous recombination OB-fold protein (607 aa).

4 disordered regions span residues 25-49 (LRPN…SYPA), 84-108 (ISSS…SGRQ), 196-308 (PWPS…TTVT), and 531-581 (LKPP…DDLD). Polar residues-rich tracts occupy residues 27 to 49 (PNSS…SYPA) and 92 to 108 (QQRM…SGRQ). S30 is modified (phosphoserine). R281 bears the Asymmetric dimethylarginine mark. Over residues 295–308 (SPFSTPRSTSTTVT) the composition is skewed to low complexity. Residues 570–581 (PEEELPEADDLD) show a composition bias toward acidic residues.

In terms of assembly, interacts with MCM8; this interaction is necessary for MCM8-MCM9 helicase complex recruitment to DNA damage sites. Interacts with RPA1; this interaction associates HROB with the RPA complex.

Its subcellular location is the nucleus. It localises to the chromosome. Functionally, DNA-binding protein involved in homologous recombination that acts by recruiting the MCM8-MCM9 helicase complex to sites of DNA damage to promote DNA repair synthesis. In Rattus norvegicus (Rat), this protein is Homologous recombination OB-fold protein.